The sequence spans 688 residues: DNA-directed RNA polymerase subunit beta' (688 aa).

Residues Cys-69, Cys-71, Cys-87, and Cys-90 each contribute to the Zn(2+) site. Residues Asp-493, Asp-495, and Asp-497 each coordinate Mg(2+).

The protein belongs to the RNA polymerase beta' chain family. RpoC1 subfamily. In terms of assembly, in plastids the minimal PEP RNA polymerase catalytic core is composed of four subunits: alpha, beta, beta', and beta''. When a (nuclear-encoded) sigma factor is associated with the core the holoenzyme is formed, which can initiate transcription. Mg(2+) is required as a cofactor. It depends on Zn(2+) as a cofactor.

It is found in the plastid. Its subcellular location is the chloroplast. The enzyme catalyses RNA(n) + a ribonucleoside 5'-triphosphate = RNA(n+1) + diphosphate. DNA-dependent RNA polymerase catalyzes the transcription of DNA into RNA using the four ribonucleoside triphosphates as substrates. This is DNA-directed RNA polymerase subunit beta' from Chloranthus spicatus (Chulantree).